Here is a 427-residue protein sequence, read N- to C-terminus: MKLETKAQGLRGSLRIPGDKSISHRSIMFGSLAKGVTTVRDILRGEDVLSTMQVFRDLGVTIEDDGDVVRIHGVGFDGLKAPQNKLDMGNSGTSIRLISGVLAGQDFDVEMFGDDSLSKRPMDRVTIPLRQMGVEVSGQTDRDLPPLKMHGSKSLKPIYYELPVASAQVKSALIFAALQADGESVIIEKEKTRNHTEDMIQQFGGQLQVEGKEIRISGGQTFTAQEVVVPGDISSAAFWLVAGLVVPNSKIVLKNVGINETRTGIIDVIKDMGGKIKLSDIDQVAKSATITVETSELKGTEIGGDIIPRLIDELPIITLLATQAQGKTVIRDAEELKVKETDRIQVVADALNAMGADIVPTEDGMIITGKTPLHGAEVNTFGDHRIGMMTAIAALLVQDGEVDLQRAEAINTSYPSFFSDLEGLLHG.

3 residues coordinate 3-phosphoshikimate: K20, S21, and R25. Residue K20 participates in phosphoenolpyruvate binding. 2 residues coordinate phosphoenolpyruvate: G92 and R120. 3-phosphoshikimate contacts are provided by S166, Q168, D312, and K339. Q168 is a binding site for phosphoenolpyruvate. D312 (proton acceptor) is an active-site residue. R343 and R385 together coordinate phosphoenolpyruvate.

This sequence belongs to the EPSP synthase family. Monomer.

Its subcellular location is the cytoplasm. It catalyses the reaction 3-phosphoshikimate + phosphoenolpyruvate = 5-O-(1-carboxyvinyl)-3-phosphoshikimate + phosphate. Its pathway is metabolic intermediate biosynthesis; chorismate biosynthesis; chorismate from D-erythrose 4-phosphate and phosphoenolpyruvate: step 6/7. Its function is as follows. Catalyzes the transfer of the enolpyruvyl moiety of phosphoenolpyruvate (PEP) to the 5-hydroxyl of shikimate-3-phosphate (S3P) to produce enolpyruvyl shikimate-3-phosphate and inorganic phosphate. The chain is 3-phosphoshikimate 1-carboxyvinyltransferase from Streptococcus thermophilus (strain CNRZ 1066).